The chain runs to 255 residues: Shieldin complex subunit 3 (255 aa).

The segment at 33–88 is sufficient for interaction with MAD2L2; sequence QDFPTHPLPRFIPWFPYDESKLPLKPERLPPVISEEAAESVKQYLAISEPGVKSQS. Positions 116–135 are disordered; it reads QTNAAHLDKNSGKEKQHKQR.

As to quaternary structure, component of the shieldin complex, consisting of SHLD1, SHLD2, SHLD3 and MAD2L2/REV7. Within the complex, SHLD2 forms a scaffold which interacts with a SHLD3-MAD2L2 subcomplex via its N-terminus, and with SHLD1 via its C-terminus. Interacts with ASTE1.

It is found in the chromosome. Its function is as follows. Component of the shieldin complex, which plays an important role in repair of DNA double-stranded breaks (DSBs). During G1 and S phase of the cell cycle, the complex functions downstream of TP53BP1 to promote non-homologous end joining (NHEJ) and suppress DNA end resection. Mediates various NHEJ-dependent processes including immunoglobulin class-switch recombination, and fusion of unprotected telomeres. The protein is Shieldin complex subunit 3 of Mus musculus (Mouse).